Reading from the N-terminus, the 417-residue chain is MAEIKNYCLNFGPQHPAAHGVLRLVLELDGEVVQRADPHIGLLHRATEKLAEHKTYIQSLPYMDRLDYVSMMCNEHAYCLALEKLLGLPVPLRAQYIRVLFAEITRLLNHLMWLGSHANDCGSSTMLMYTFREREDLFDMYEAVSGARMHAAYFRPGGVYRDLPDSMPRYQASKIRNARALAALNQNRQGSLLDFIADFAQRFPGCVDEYETLLTDNRIWKQRTVGIGVVSPQRALNLGMTGPMLRGSGIAWDLRKTQPYDVYEHMDFDVPVGKTGDCYDRYLVRVQEMREANRIIGQCVAWLRANPGPVITDNHKVAAPGRAAMKSNMEELIHHFKLFTEGFHVPEGEAYAAVEHPKGEFGIYLVSDGANKPYRLKIRAPGFAHLATLDEMARGHMIADAVAIIGTMDIVFGEIDR.

This sequence belongs to the complex I 49 kDa subunit family. NDH-1 is composed of 14 different subunits. Subunits NuoB, C, D, E, F, and G constitute the peripheral sector of the complex.

It is found in the cell inner membrane. It catalyses the reaction a quinone + NADH + 5 H(+)(in) = a quinol + NAD(+) + 4 H(+)(out). Its function is as follows. NDH-1 shuttles electrons from NADH, via FMN and iron-sulfur (Fe-S) centers, to quinones in the respiratory chain. The immediate electron acceptor for the enzyme in this species is believed to be ubiquinone. Couples the redox reaction to proton translocation (for every two electrons transferred, four hydrogen ions are translocated across the cytoplasmic membrane), and thus conserves the redox energy in a proton gradient. The polypeptide is NADH-quinone oxidoreductase subunit D (Verminephrobacter eiseniae (strain EF01-2)).